The primary structure comprises 77 residues: Membrane-associated ATPase epsilon chain (77 aa).

The protein to E.hirae NtpH. As to quaternary structure, sul-ATPase is composed of six (or maybe five) subunits: alpha, beta, delta, gamma, C (proteolipid), and possibly epsilon.

The catalysed reaction is ATP + H2O + 4 H(+)(in) = ADP + phosphate + 5 H(+)(out). The sequence is that of Membrane-associated ATPase epsilon chain (atpE) from Sulfolobus acidocaldarius (strain ATCC 33909 / DSM 639 / JCM 8929 / NBRC 15157 / NCIMB 11770).